The primary structure comprises 234 residues: Leucyl/phenylalanyl-tRNA--protein transferase (234 aa).

This sequence belongs to the L/F-transferase family.

The protein resides in the cytoplasm. The enzyme catalyses N-terminal L-lysyl-[protein] + L-leucyl-tRNA(Leu) = N-terminal L-leucyl-L-lysyl-[protein] + tRNA(Leu) + H(+). The catalysed reaction is N-terminal L-arginyl-[protein] + L-leucyl-tRNA(Leu) = N-terminal L-leucyl-L-arginyl-[protein] + tRNA(Leu) + H(+). It catalyses the reaction L-phenylalanyl-tRNA(Phe) + an N-terminal L-alpha-aminoacyl-[protein] = an N-terminal L-phenylalanyl-L-alpha-aminoacyl-[protein] + tRNA(Phe). Its function is as follows. Functions in the N-end rule pathway of protein degradation where it conjugates Leu, Phe and, less efficiently, Met from aminoacyl-tRNAs to the N-termini of proteins containing an N-terminal arginine or lysine. In Myxococcus xanthus (strain DK1622), this protein is Leucyl/phenylalanyl-tRNA--protein transferase.